A 222-amino-acid polypeptide reads, in one-letter code: Peroxiredoxin (222 aa).

A Thioredoxin domain is found at 2 to 157 (VVLGQKFPEV…ILRLVEALQT (156 aa)). The active-site Cysteine sulfenic acid (-SOH) intermediate is cysteine 44. A substrate-binding site is contributed by arginine 120. A disulfide bridge connects residues cysteine 211 and cysteine 217.

The protein belongs to the peroxiredoxin family. Prx6 subfamily. As to quaternary structure, homodecamer. Pentamer of dimers that assemble into a ring structure.

The protein resides in the cytoplasm. It carries out the reaction a hydroperoxide + [thioredoxin]-dithiol = an alcohol + [thioredoxin]-disulfide + H2O. Thiol-specific peroxidase that catalyzes the reduction of hydrogen peroxide and organic hydroperoxides to water and alcohols, respectively. Plays a role in cell protection against oxidative stress by detoxifying peroxides. The chain is Peroxiredoxin from Nanoarchaeum equitans (strain Kin4-M).